The primary structure comprises 361 residues: DNA replication and repair protein RecF (361 aa).

ATP is bound at residue 30-37 (GPNGSGKT).

The protein belongs to the RecF family.

Its subcellular location is the cytoplasm. In terms of biological role, the RecF protein is involved in DNA metabolism; it is required for DNA replication and normal SOS inducibility. RecF binds preferentially to single-stranded, linear DNA. It also seems to bind ATP. The polypeptide is DNA replication and repair protein RecF (Yersinia pseudotuberculosis serotype IB (strain PB1/+)).